Here is a 211-residue protein sequence, read N- to C-terminus: RILP-like protein 2 (211 aa).

Positions 1–32 (MEEPPVREEEEEEGEEDEERDEVGPEGALGKS) are disordered. Residues 8–21 (EEEEEEGEEDEERD) are compositionally biased toward acidic residues. The region spanning 24-106 (GPEGALGKSP…RKEVEGLRRQ (83 aa)) is the RH1 domain. Residues 70 to 164 (RVLEMLEALV…VQEELQCYKS (95 aa)) are a coiled coil. A Phosphoserine modification is found at S107. Residues 130–201 (RPRFTLQELR…NKEEKTIIKK (72 aa)) enclose the RH2 domain. A disordered region spans residues 166–190 (LIPPREGPGGRREKDAVVTSAKNAG).

The protein belongs to the RILPL family. Homodimer. Interacts with RAC1. Interacts (via N-terminus) with MYO5A, the interaction is required for its role in dendrite formation. Interacts with RAB8A; interaction is dependent on the phosphorylation of RAB8A on 'Thr-72'. Interacts with RAB10 and RAB12; interaction is dependent on the phosphorylation of 'Thr-73' on RAB10 and 'Ser-105' on RAB12. As to expression, widely expressed. Expressed at higher level in lung.

It is found in the cytoplasm. Its subcellular location is the cytosol. The protein resides in the cytoskeleton. It localises to the microtubule organizing center. The protein localises to the centrosome. It is found in the cell projection. Its subcellular location is the cilium. Involved in cell shape and neuronal morphogenesis, positively regulating the establishment and maintenance of dendritic spines. Plays a role in cellular protein transport, including protein transport away from primary cilia. May function via activation of RAC1 and PAK1. The chain is RILP-like protein 2 (RILPL2) from Homo sapiens (Human).